The sequence spans 112 residues: Iron-sulfur cluster assembly protein CyaY (112 aa).

Belongs to the frataxin family.

Its function is as follows. Involved in iron-sulfur (Fe-S) cluster assembly. May act as a regulator of Fe-S biogenesis. The chain is Iron-sulfur cluster assembly protein CyaY from Janthinobacterium sp. (strain Marseille) (Minibacterium massiliensis).